A 416-amino-acid polypeptide reads, in one-letter code: GTPase Obg (416 aa).

One can recognise an Obg domain in the interval 1–157; that stretch reads MFQDVLVITV…RRLRLELMLI (157 aa). Disordered stretches follow at residues 25–44 and 62–82; these read EKFV…GGSV and TYKA…RGGE. Over residues 32-42 the composition is skewed to gly residues; the sequence is GPDGGDGGRGG. The span at 63–72 shows a compositional bias: basic and acidic residues; sequence YKAEDGEHGR. Residues 158–324 form the OBG-type G domain; the sequence is ADVGLVGYPN…LKEALHALVR (167 aa). GTP-binding positions include 164–171, 189–193, 211–214, 277–280, and 305–307; these read GYPNAGKS, FTTLS, DIPG, NKVD, and SAL. Residues Ser171 and Thr191 each coordinate Mg(2+). One can recognise an OCT domain in the interval 336-414; that stretch reads PRKEVQAGVE…IGGLEFEYIP (79 aa).

The protein belongs to the TRAFAC class OBG-HflX-like GTPase superfamily. OBG GTPase family. In terms of assembly, monomer. Mg(2+) is required as a cofactor.

It is found in the cytoplasm. An essential GTPase which binds GTP, GDP and possibly (p)ppGpp with moderate affinity, with high nucleotide exchange rates and a fairly low GTP hydrolysis rate. Plays a role in control of the cell cycle, stress response, ribosome biogenesis and in those bacteria that undergo differentiation, in morphogenesis control. This is GTPase Obg from Thermus thermophilus (strain ATCC BAA-163 / DSM 7039 / HB27).